The chain runs to 185 residues: 3-hexulose-6-phosphate isomerase (185 aa).

One can recognise an SIS domain in the interval 29-172 (LADHILSSHQ…ILKLMEKKGL (144 aa)). Residues Ser47 and 86 to 91 (SGSGET) each bind substrate. Residue Glu152 is the Proton acceptor of the active site.

This sequence belongs to the SIS family. PHI subfamily. Homotetramer.

It carries out the reaction D-arabino-hex-3-ulose 6-phosphate = beta-D-fructose 6-phosphate. The protein operates within one-carbon metabolism; formaldehyde assimilation via RuMP pathway; D-fructose 6-phosphate from D-ribulose 5-phosphate and formaldehyde: step 2/2. Catalyzes the isomerization between 3-hexulose 6-phosphate and fructose 6-phosphate. Together with HxlA, may act as a formaldehyde detoxification system. The sequence is that of 3-hexulose-6-phosphate isomerase (hxlB) from Bacillus subtilis (strain 168).